Here is a 364-residue protein sequence, read N- to C-terminus: UDP-N-acetylglucosamine--N-acetylmuramyl-(pentapeptide) pyrophosphoryl-undecaprenol N-acetylglucosamine transferase 1 (364 aa).

UDP-N-acetyl-alpha-D-glucosamine contacts are provided by residues 10-12, asparagine 124, serine 195, isoleucine 250, and glutamine 295; that span reads TGG.

The protein belongs to the glycosyltransferase 28 family. MurG subfamily.

Its subcellular location is the cell membrane. The enzyme catalyses di-trans,octa-cis-undecaprenyl diphospho-N-acetyl-alpha-D-muramoyl-L-alanyl-D-glutamyl-meso-2,6-diaminopimeloyl-D-alanyl-D-alanine + UDP-N-acetyl-alpha-D-glucosamine = di-trans,octa-cis-undecaprenyl diphospho-[N-acetyl-alpha-D-glucosaminyl-(1-&gt;4)]-N-acetyl-alpha-D-muramoyl-L-alanyl-D-glutamyl-meso-2,6-diaminopimeloyl-D-alanyl-D-alanine + UDP + H(+). It functions in the pathway cell wall biogenesis; peptidoglycan biosynthesis. Its function is as follows. Cell wall formation. Catalyzes the transfer of a GlcNAc subunit on undecaprenyl-pyrophosphoryl-MurNAc-pentapeptide (lipid intermediate I) to form undecaprenyl-pyrophosphoryl-MurNAc-(pentapeptide)GlcNAc (lipid intermediate II). The protein is UDP-N-acetylglucosamine--N-acetylmuramyl-(pentapeptide) pyrophosphoryl-undecaprenol N-acetylglucosamine transferase 1 of Bacillus cereus (strain ATCC 10987 / NRS 248).